Reading from the N-terminus, the 293-residue chain is Ribosomal protein L11 methyltransferase (293 aa).

S-adenosyl-L-methionine is bound by residues Thr-145, Gly-166, Asp-188, and Asn-230.

This sequence belongs to the methyltransferase superfamily. PrmA family.

The protein localises to the cytoplasm. It catalyses the reaction L-lysyl-[protein] + 3 S-adenosyl-L-methionine = N(6),N(6),N(6)-trimethyl-L-lysyl-[protein] + 3 S-adenosyl-L-homocysteine + 3 H(+). Methylates ribosomal protein L11. In Escherichia coli (strain SMS-3-5 / SECEC), this protein is Ribosomal protein L11 methyltransferase.